Here is a 361-residue protein sequence, read N- to C-terminus: tRNA-specific 2-thiouridylase MnmA (361 aa).

ATP is bound by residues alanine 8 to serine 15 and methionine 35. Residues asparagine 95 to aspartate 97 are interaction with target base in tRNA. The Nucleophile role is filled by cysteine 100. The cysteines at positions 100 and 196 are disulfide-linked. ATP is bound at residue glycine 124. The interval lysine 146–glutamine 148 is interaction with tRNA. Cysteine 196 (cysteine persulfide intermediate) is an active-site residue. The tract at residues arginine 303–tyrosine 304 is interaction with tRNA.

Belongs to the MnmA/TRMU family.

The protein localises to the cytoplasm. The enzyme catalyses S-sulfanyl-L-cysteinyl-[protein] + uridine(34) in tRNA + AH2 + ATP = 2-thiouridine(34) in tRNA + L-cysteinyl-[protein] + A + AMP + diphosphate + H(+). Its function is as follows. Catalyzes the 2-thiolation of uridine at the wobble position (U34) of tRNA, leading to the formation of s(2)U34. In Chlamydia felis (strain Fe/C-56) (Chlamydophila felis), this protein is tRNA-specific 2-thiouridylase MnmA.